The following is a 146-amino-acid chain: uncharacterized protein (146 aa).

The chain crosses the membrane as a helical span at residues 7–27; sequence FVLSITIVLVILIIIAFIWYN.

The protein belongs to the asfivirus E146L family.

The protein localises to the host membrane. Its subcellular location is the virion. This is an uncharacterized protein from Ornithodoros (relapsing fever ticks).